We begin with the raw amino-acid sequence, 247 residues long: Probable transcriptional regulatory protein PBPRA1113 (247 aa).

The protein belongs to the TACO1 family.

Its subcellular location is the cytoplasm. This is Probable transcriptional regulatory protein PBPRA1113 from Photobacterium profundum (strain SS9).